Consider the following 225-residue polypeptide: Ribonuclease T (225 aa).

Residues 1–21 (MSEDHFDDEHEGHGGGGGSRH) form a disordered region. Positions 33 to 207 (VVVDVETGGF…YDTEKTAELF (175 aa)) constitute an Exonuclease domain. Asp36, Glu38, His194, and Asp199 together coordinate Mg(2+). His194 functions as the Proton donor/acceptor in the catalytic mechanism.

It belongs to the RNase T family. Homodimer. Mg(2+) is required as a cofactor.

Trims short 3' overhangs of a variety of RNA species, leaving a one or two nucleotide 3' overhang. Responsible for the end-turnover of tRNA: specifically removes the terminal AMP residue from uncharged tRNA (tRNA-C-C-A). Also appears to be involved in tRNA biosynthesis. The polypeptide is Ribonuclease T (Pseudomonas syringae pv. syringae (strain B728a)).